A 386-amino-acid chain; its full sequence is S-adenosylmethionine synthase (386 aa).

H17 contacts ATP. Residue D19 participates in Mg(2+) binding. E45 contributes to the K(+) binding site. L-methionine-binding residues include E58 and Q101. The tract at residues 101-111 (QSPDISQGVTE) is flexible loop. Residues 168–170 (DAK), D242, 248–249 (RK), A265, and K269 contribute to the ATP site. Residue D242 participates in L-methionine binding. K273 provides a ligand contact to L-methionine.

The protein belongs to the AdoMet synthase family. In terms of assembly, homotetramer; dimer of dimers. It depends on Mg(2+) as a cofactor. K(+) serves as cofactor.

Its subcellular location is the cytoplasm. The enzyme catalyses L-methionine + ATP + H2O = S-adenosyl-L-methionine + phosphate + diphosphate. Its pathway is amino-acid biosynthesis; S-adenosyl-L-methionine biosynthesis; S-adenosyl-L-methionine from L-methionine: step 1/1. Its function is as follows. Catalyzes the formation of S-adenosylmethionine (AdoMet) from methionine and ATP. The overall synthetic reaction is composed of two sequential steps, AdoMet formation and the subsequent tripolyphosphate hydrolysis which occurs prior to release of AdoMet from the enzyme. This chain is S-adenosylmethionine synthase, found in Leptospira borgpetersenii serovar Hardjo-bovis (strain JB197).